Reading from the N-terminus, the 466-residue chain is ATP-dependent protease ATPase subunit HslU (466 aa).

Residues isoleucine 18, glycine 60–glutamate 65, aspartate 279, glutamate 344, and arginine 416 contribute to the ATP site.

It belongs to the ClpX chaperone family. HslU subfamily. A double ring-shaped homohexamer of HslV is capped on each side by a ring-shaped HslU homohexamer. The assembly of the HslU/HslV complex is dependent on binding of ATP.

Its subcellular location is the cytoplasm. In terms of biological role, ATPase subunit of a proteasome-like degradation complex; this subunit has chaperone activity. The binding of ATP and its subsequent hydrolysis by HslU are essential for unfolding of protein substrates subsequently hydrolyzed by HslV. HslU recognizes the N-terminal part of its protein substrates and unfolds these before they are guided to HslV for hydrolysis. In Lactobacillus acidophilus (strain ATCC 700396 / NCK56 / N2 / NCFM), this protein is ATP-dependent protease ATPase subunit HslU.